Consider the following 493-residue polypeptide: Glutamate--tRNA ligase (493 aa).

A 'HIGH' region motif is present at residues 10–20 (PSPTGDPHVGT). The 'KMSKS' region signature appears at 251–255 (KLSKR). Lys254 is an ATP binding site.

This sequence belongs to the class-I aminoacyl-tRNA synthetase family. Glutamate--tRNA ligase type 1 subfamily. As to quaternary structure, monomer.

The protein resides in the cytoplasm. It catalyses the reaction tRNA(Glu) + L-glutamate + ATP = L-glutamyl-tRNA(Glu) + AMP + diphosphate. Catalyzes the attachment of glutamate to tRNA(Glu) in a two-step reaction: glutamate is first activated by ATP to form Glu-AMP and then transferred to the acceptor end of tRNA(Glu). This chain is Glutamate--tRNA ligase, found in Marinomonas sp. (strain MWYL1).